We begin with the raw amino-acid sequence, 176 residues long: Dual-action ribosomal maturation protein DarP (176 aa).

Positions 1 to 16 (MRLIDPDADLEFDPDS) are enriched in acidic residues. A disordered region spans residues 1–29 (MRLIDPDADLEFDPDSVYDGPSKSQKKRE).

Belongs to the DarP family.

Its subcellular location is the cytoplasm. Functionally, member of a network of 50S ribosomal subunit biogenesis factors which assembles along the 30S-50S interface, preventing incorrect 23S rRNA structures from forming. Promotes peptidyl transferase center (PTC) maturation. This is Dual-action ribosomal maturation protein DarP from Thiobacillus denitrificans (strain ATCC 25259 / T1).